Here is an 860-residue protein sequence, read N- to C-terminus: MAGLTAVVPQPGVLLILLLNLLHPAQPGGVPGAVPGGLPGGVPGGVYYPGAGIGGLGGGGGALGPGGKPPKPGAGLLGTFGAGPGGLGGAGPGAGLGAFPAGTFPGAGALVPGGAAGAAAAYKAAAKAGAGLGGVGGVPGGVGVGGVPGGVGVGGVPGGVGVGGVPGGVGGIGGIGGLGVSTGAVVPQVGAGIGAGGKPGKVPGVGLPGVYPGGVLPGTGARFPGVGVLPGVPTGTGVKAKAPGGGGAFAGIPGVGPFGGQQPGVPLGYPIKAPKLPGGYGLPYTNGKLPYGVAGAGGKAGYPTGTGVGSQAAAAAAKAAKYGAGGAGVLPGVGGGGIPGGAGAIPGIGGIAGAGTPAAAAAAKAAAKAAKYGAAGGLVPGGPGVRLPGAGIPGVGGIPGVGGIPGVGGPGIGGPGIVGGPGAVSPAAAAKAAAKAAKYGARGGVGIPTYGVGAGGFPGYGVGAGAGLGGASPAAAAAAAKAAKYGAGGAGALGGLVPGAVPGALPGAVPAVPGAGGVPGAGTPAAAAAAAAAKAAAKAGLGPGVGGVPGGVGVGGIPGGVGVGGVPGGVGPGGVTGIGAGPGGLGGAGSPAAAKSAAKAAAKAQYRAAAGLGAGVPGFGAGAGVPGFGAGAGVPGFGAGAGVPGFGAGAGVPGFGAGAVPGSLAASKAAKYGAAGGLGGPGGLGGPGGLGGPGGLGGAGVPGRVAGAAPPAAAAAAAKAAAKAAQYGLGGAGGLGAGGLGAGGLGAGGLGAGGLGAGGLGAGGLGAGGLGAGGGVSPAAAAKAAKYGAAGLGGVLGARPFPGGGVAARPGFGLSPIYPGGGAGGLGVGGKPPKPYGGALGALGYQGGGCFGKSCGRKRK.

The N-terminal stretch at 1-27 (MAGLTAVVPQPGVLLILLLNLLHPAQP) is a signal peptide. Proline 35 and proline 72 each carry 4-hydroxyproline. Proline 84 is modified (hydroxyproline). Proline 105 carries the post-translational modification 4-hydroxyproline. An allysine mark is found at lysine 123 and lysine 127. 4-hydroxyproline is present on residues proline 217, proline 230, proline 233, and proline 253. Allysine occurs at positions 299, 318, and 321. 4-hydroxyproline is present on proline 346. 2 positions are modified to allysine: lysine 368 and lysine 371. Position 383 is a hydroxyproline (proline 383). 4-hydroxyproline occurs at positions 399 and 405. 2 positions are modified to hydroxyproline: proline 410 and proline 415. Allysine occurs at positions 431, 435, 438, 481, and 484. 2 positions are modified to 4-hydroxyproline: proline 498 and proline 519. 4 positions are modified to allysine: lysine 534, lysine 595, lysine 599, and lysine 603. 4-hydroxyproline is present on residues proline 617, proline 626, proline 644, proline 653, and proline 661. 2 positions are modified to allysine: lysine 668 and lysine 671. Proline 702 is subject to 4-hydroxyproline. Residues lysine 719, lysine 723, lysine 783, and lysine 786 each carry the allysine modification. The residue at position 832 (proline 832) is a 4-hydroxyproline. Cysteine 850 and cysteine 855 form a disulfide bridge.

It belongs to the elastin family. In terms of assembly, the polymeric elastin chains are cross-linked together into an extensible 3D network. Forms a ternary complex with BGN and MFAP2. Interacts with MFAP2 via divalent cations (calcium &gt; magnesium &gt; manganese) in a dose-dependent and saturating manner. Interacts with FBLN5 and FBN1. Forms a ternary complex with FBN1 and FBLN2 or FBLN5. Interacts with MFAP4 in a Ca (2+)-dependent manner; this interaction promotes ELN self-assembly. Interacts with EFEMP2 with moderate affinity. Elastin is formed through the cross-linking of its soluble precursor tropoelastin. Cross-linking is initiated through the action of lysyl oxidase on exposed lysines to form allysine. Subsequent spontaneous condensation reactions with other allysine or unmodified lysine residues result in various bi-, tri-, and tetrafunctional cross-links. The most abundant cross-links in mature elastin fibers are lysinonorleucine, allysine aldol, desmosine, and isodesmosine. Post-translationally, hydroxylation on proline residues within the sequence motif, GXPG, is most likely to be 4-hydroxy as this fits the requirement for 4-hydroxylation in vertebrates.

It localises to the secreted. Its subcellular location is the extracellular space. The protein localises to the extracellular matrix. Functionally, major structural protein of tissues such as aorta and nuchal ligament, which must expand rapidly and recover completely. Molecular determinant of the late arterial morphogenesis, stabilizing arterial structure by regulating proliferation and organization of vascular smooth muscle. The chain is Elastin (Eln) from Mus musculus (Mouse).